We begin with the raw amino-acid sequence, 361 residues long: uncharacterized protein (361 aa).

An N-terminal signal peptide occupies residues Met-1–Cys-17. At Leu-18–Arg-47 the chain is on the extracellular side. An N-linked (GlcNAc...) asparagine glycan is attached at Asn-24. A helical transmembrane segment spans residues Leu-48–Leu-68. At His-69–Asn-361 the chain is on the cytoplasmic side. A compositionally biased stretch (polar residues) spans Ser-95–Pro-106. The tract at residues Ser-95–Lys-197 is disordered. Residues Pro-144–Lys-158 show a composition bias toward low complexity. Basic residues predominate over residues His-169 to Lys-185.

The protein resides in the membrane. This is an uncharacterized protein from Bos taurus (Bovine).